We begin with the raw amino-acid sequence, 252 residues long: Orotidine 5'-phosphate decarboxylase (252 aa).

Substrate-binding positions include D26, K48, 75–84, T135, R196, Q205, G225, and R226; that span reads DLKFHDIPNT. K77 (proton donor) is an active-site residue.

Belongs to the OMP decarboxylase family. Type 1 subfamily. In terms of assembly, homodimer.

The enzyme catalyses orotidine 5'-phosphate + H(+) = UMP + CO2. Its pathway is pyrimidine metabolism; UMP biosynthesis via de novo pathway; UMP from orotate: step 2/2. Its function is as follows. Catalyzes the decarboxylation of orotidine 5'-monophosphate (OMP) to uridine 5'-monophosphate (UMP). The protein is Orotidine 5'-phosphate decarboxylase of Sodalis glossinidius (strain morsitans).